Here is a 304-residue protein sequence, read N- to C-terminus: Protease HtpX homolog (304 aa).

The next 2 helical transmembrane spans lie at 14–34 (VFIVIGFFIFVLMVGAAIGII) and 39–59 (YLNGLILAAVIGAFYILIMVM). His144 serves as a coordination point for Zn(2+). Residue Glu145 is part of the active site. His148 lines the Zn(2+) pocket. The next 2 helical transmembrane spans lie at 161 to 181 (IALVAVIAILSDLAMRMIFWG) and 202 to 222 (LIIYIVALVFVVLAPIIATAI). Glu231 lines the Zn(2+) pocket. A disordered region spans residues 276–295 (SPLKSKKDKPGIFDSHPPIS).

It belongs to the peptidase M48B family. Zn(2+) serves as cofactor.

It localises to the cell membrane. The chain is Protease HtpX homolog from Listeria welshimeri serovar 6b (strain ATCC 35897 / DSM 20650 / CCUG 15529 / CIP 8149 / NCTC 11857 / SLCC 5334 / V8).